Consider the following 327-residue polypeptide: Protoheme IX farnesyltransferase (327 aa).

Transmembrane regions (helical) follow at residues 55-75 (LVCT…LNCL), 101-121 (AAFV…VSGV), 124-144 (LAAG…TALL), 152-172 (IVVG…AATG), 180-200 (WLFA…ALLL), 237-257 (FLGI…ILPF), and 278-298 (AKGL…LLVM).

The protein belongs to the UbiA prenyltransferase family. Protoheme IX farnesyltransferase subfamily.

It localises to the cell inner membrane. The catalysed reaction is heme b + (2E,6E)-farnesyl diphosphate + H2O = Fe(II)-heme o + diphosphate. It functions in the pathway porphyrin-containing compound metabolism; heme O biosynthesis; heme O from protoheme: step 1/1. Its function is as follows. Converts heme B (protoheme IX) to heme O by substitution of the vinyl group on carbon 2 of heme B porphyrin ring with a hydroxyethyl farnesyl side group. This is Protoheme IX farnesyltransferase from Synechococcus sp. (strain CC9311).